The chain runs to 2542 residues: Zinc finger FYVE domain-containing protein 26 (2542 aa).

Disordered regions lie at residues 591–658 (HLPE…GPHT) and 740–811 (VTSN…QVEA). Phosphoserine is present on residues Ser612 and Ser616. The segment covering 752 to 772 (RRYRPTAKRHSSLRRGRRTRR) has biased composition (basic residues). The span at 785-803 (SLEGTSSELSTSTSEGSLS) shows a compositional bias: low complexity. Position 798 is a phosphoserine (Ser798). The stretch at 866-891 (MFVERYQEVIQELARVEHKIENQNSD) forms a coiled coil. A disordered region spans residues 1273 to 1292 (SPRPSENPSAERKSDSSPKD). A compositionally biased stretch (basic and acidic residues) spans 1281–1290 (SAERKSDSSP). A coiled-coil region spans residues 1495 to 1522 (VSDMAVPEELKSELQRKLTELRVYQKIL). Residues Ser1739, Ser1761, Ser1783, and Ser1785 each carry the phosphoserine modification. Residues 1746-1807 (PVHQASDPET…LEFVPPETPP (62 aa)) form a disordered region. The segment covering 1757–1779 (SRSSSAEFSAAAAAPAPAAPGSA) has biased composition (low complexity). An FYVE-type zinc finger spans residues 1815-1875 (DETESMCMVC…VCDQCYSYYN (61 aa)). Zn(2+) contacts are provided by Cys1821, Cys1824, Cys1838, Cys1841, Cys1846, Cys1849, Cys1867, and Cys1870.

The protein belongs to the ZFYVE26 family. In terms of assembly, interacts with AP5Z1, AP5B1, AP5S1 and SPG11. Interacts with TTC19 and KIF13A.

It localises to the cytoplasm. It is found in the cytoskeleton. The protein resides in the microtubule organizing center. The protein localises to the centrosome. Its subcellular location is the midbody. Its function is as follows. Phosphatidylinositol 3-phosphate-binding protein required for the abscission step in cytokinesis: recruited to the midbody during cytokinesis and acts as a regulator of abscission. May also be required for efficient homologous recombination DNA double-strand break repair. This Rattus norvegicus (Rat) protein is Zinc finger FYVE domain-containing protein 26 (Zfyve26).